The chain runs to 170 residues: Cytochrome P450 monooxygenase oryQ (170 aa).

C85 contributes to the heme binding site.

Belongs to the cytochrome P450 family. Heme is required as a cofactor.

It functions in the pathway secondary metabolite biosynthesis. Cytochrome P450 monooxygenase; part of the gene cluster that mediates the biosynthesis of oryzines, natural products with an unusual maleidride backbone. The two subunits of the fungal fatty acid synthase oryfasA and oryfasB probably form octenoic acid. This fatty acid is most likely activated by the acyl-CoA ligase oryP to give octenyl-CoA before the citrate synthase-like protein oryE catalyzes condensation with oxaloacetate to form tricarboxylic acid. The next steps of the pathways are conjectural, but a favorite possible route has been proposed, beginning with decarboxylation and concomitant dehydration by the decarboxylase oryM, followed by tautomerization, which may lead to the production of a diene intermediate. Reduction of this diene intermediate could give the known metabolite piliformic acid. On the pathway to oryzine B and oryzine A, however, hydroxylation of the diene by the alpha-ketoglutarate-dependent dioxygenase oryG and lactonisation by the lactonohydrolases oryH or oryL could give oryzine B directly. Finally, enoyl reduction by the dehydrogenase oryD would then convert oryzine B into oryzine A. The chain is Cytochrome P450 monooxygenase oryQ from Aspergillus oryzae (strain ATCC 42149 / RIB 40) (Yellow koji mold).